The sequence spans 285 residues: Meiotically up-regulated gene 74 protein (285 aa).

Its subcellular location is the cytoplasm. Functionally, has a role in meiosis. This Schizosaccharomyces pombe (strain 972 / ATCC 24843) (Fission yeast) protein is Meiotically up-regulated gene 74 protein (mug74).